Reading from the N-terminus, the 352-residue chain is Photosystem II D2 protein (352 aa).

A helical transmembrane segment spans residues 40 to 60 (CAYLAVGAWFTGTTFVTSWYT). His-117 is a binding site for chlorophyll a. A helical transmembrane segment spans residues 124–140 (GFTLRQFEIARLIGLRP). Pheophytin a is bound by residues Gln-129 and Asn-142. Residues 152-165 (VFVSVFLLYPLGQA) traverse the membrane as a helical segment. His-197 contacts chlorophyll a. A helical transmembrane segment spans residues 207 to 227 (AALLCAIHGATVENTLFEDGD). Residues His-214 and Phe-261 each contribute to the a plastoquinone site. Position 214 (His-214) interacts with Fe cation. His-268 is a binding site for Fe cation. Residues 278-294 (GLWMSAIGVVGLGVNLR) traverse the membrane as a helical segment.

It belongs to the reaction center PufL/M/PsbA/D family. As to quaternary structure, PSII is composed of 1 copy each of membrane proteins PsbA, PsbB, PsbC, PsbD, PsbE, PsbF, PsbH, PsbI, PsbJ, PsbK, PsbL, PsbM, PsbT, PsbX, PsbY, PsbZ, Psb30/Ycf12, at least 3 peripheral proteins of the oxygen-evolving complex and a large number of cofactors. It forms dimeric complexes. The D1/D2 heterodimer binds P680, chlorophylls that are the primary electron donor of PSII, and subsequent electron acceptors. It shares a non-heme iron and each subunit binds pheophytin, quinone, additional chlorophylls, carotenoids and lipids. There is also a Cl(-1) ion associated with D1 and D2, which is required for oxygen evolution. The PSII complex binds additional chlorophylls, carotenoids and specific lipids. is required as a cofactor.

The protein resides in the plastid. The protein localises to the cyanelle thylakoid membrane. It carries out the reaction 2 a plastoquinone + 4 hnu + 2 H2O = 2 a plastoquinol + O2. In terms of biological role, photosystem II (PSII) is a light-driven water:plastoquinone oxidoreductase that uses light energy to abstract electrons from H(2)O, generating O(2) and a proton gradient subsequently used for ATP formation. It consists of a core antenna complex that captures photons, and an electron transfer chain that converts photonic excitation into a charge separation. The D1/D2 (PsbA/PsbD) reaction center heterodimer binds P680, the primary electron donor of PSII as well as several subsequent electron acceptors. D2 is needed for assembly of a stable PSII complex. The chain is Photosystem II D2 protein from Cyanophora paradoxa.